The chain runs to 78 residues: Acyl carrier protein (78 aa).

In terms of domain architecture, Carrier spans 2–77; sequence STIEERVKKI…AAIDYINGHQ (76 aa). At Ser37 the chain carries O-(pantetheine 4'-phosphoryl)serine.

It belongs to the acyl carrier protein (ACP) family. Post-translationally, 4'-phosphopantetheine is transferred from CoA to a specific serine of apo-ACP by AcpS. This modification is essential for activity because fatty acids are bound in thioester linkage to the sulfhydryl of the prosthetic group.

It is found in the cytoplasm. It participates in lipid metabolism; fatty acid biosynthesis. In terms of biological role, carrier of the growing fatty acid chain in fatty acid biosynthesis. This Shigella flexneri protein is Acyl carrier protein.